Reading from the N-terminus, the 986-residue chain is Bifunctional glutamine synthetase adenylyltransferase/adenylyl-removing enzyme (986 aa).

Residues 1-470 (MAAVAKRTVT…ERHYAALFET (470 aa)) are adenylyl removase. The segment at 476–986 (AGIGNLVFTG…FDLLLRAGRP (511 aa)) is adenylyl transferase.

The protein belongs to the GlnE family. It depends on Mg(2+) as a cofactor.

The catalysed reaction is [glutamine synthetase]-O(4)-(5'-adenylyl)-L-tyrosine + phosphate = [glutamine synthetase]-L-tyrosine + ADP. It catalyses the reaction [glutamine synthetase]-L-tyrosine + ATP = [glutamine synthetase]-O(4)-(5'-adenylyl)-L-tyrosine + diphosphate. Its function is as follows. Involved in the regulation of glutamine synthetase GlnA, a key enzyme in the process to assimilate ammonia. When cellular nitrogen levels are high, the C-terminal adenylyl transferase (AT) inactivates GlnA by covalent transfer of an adenylyl group from ATP to specific tyrosine residue of GlnA, thus reducing its activity. Conversely, when nitrogen levels are low, the N-terminal adenylyl removase (AR) activates GlnA by removing the adenylyl group by phosphorolysis, increasing its activity. The regulatory region of GlnE binds the signal transduction protein PII (GlnB) which indicates the nitrogen status of the cell. The chain is Bifunctional glutamine synthetase adenylyltransferase/adenylyl-removing enzyme from Mesorhizobium japonicum (strain LMG 29417 / CECT 9101 / MAFF 303099) (Mesorhizobium loti (strain MAFF 303099)).